The following is a 169-amino-acid chain: UPF0398 protein Spy49_1277c (169 aa).

The protein belongs to the UPF0398 family.

This chain is UPF0398 protein Spy49_1277c, found in Streptococcus pyogenes serotype M49 (strain NZ131).